A 418-amino-acid chain; its full sequence is UDP-N-acetylglucosamine 1-carboxyvinyltransferase (418 aa).

22-23 serves as a coordination point for phosphoenolpyruvate; that stretch reads KN. Arg93 is a binding site for UDP-N-acetyl-alpha-D-glucosamine. Residue Cys117 is the Proton donor of the active site. Residue Cys117 is modified to 2-(S-cysteinyl)pyruvic acid O-phosphothioketal. 2 residues coordinate UDP-N-acetyl-alpha-D-glucosamine: Asp305 and Val327.

The protein belongs to the EPSP synthase family. MurA subfamily.

The protein localises to the cytoplasm. The enzyme catalyses phosphoenolpyruvate + UDP-N-acetyl-alpha-D-glucosamine = UDP-N-acetyl-3-O-(1-carboxyvinyl)-alpha-D-glucosamine + phosphate. It participates in cell wall biogenesis; peptidoglycan biosynthesis. Cell wall formation. Adds enolpyruvyl to UDP-N-acetylglucosamine. This is UDP-N-acetylglucosamine 1-carboxyvinyltransferase from Halorhodospira halophila (strain DSM 244 / SL1) (Ectothiorhodospira halophila (strain DSM 244 / SL1)).